The primary structure comprises 1055 residues: Ubiquitin carboxyl-terminal hydrolase 25 (1055 aa).

A UBA-like domain is found at 14-57 (QKHQQTFLNQLREITGINDTQILQQALKDSNGNLELAVAFLTAK). An SUMO interaction domain (SIM) region spans residues 77–102 (NDRYISVGSQADTNVIDLTGDDKDDL). Ser-85 is modified (phosphoserine). Positions 89–95 (TNVIDLT) match the Required for SUMO paralog-specific binding motif. 2 consecutive UIM domains span residues 97–116 (DDKDDLQRAIALSLAESNRA) and 123–140 (TDEEQAISRVLEASIAEN). Lys-99 participates in a covalent cross-link: Glycyl lysine isopeptide (Lys-Gly) (interchain with G-Cter in SUMO); alternate. Lys-99 participates in a covalent cross-link: Glycyl lysine isopeptide (Lys-Gly) (interchain with G-Cter in ubiquitin); alternate. A USP domain is found at 169–657 (VGLKNVGNTC…SAYCLMYIND (489 aa)). The active site involves Cys-178. The segment at 464 to 507 (VCTSPVDDIDASSPPSGSIPSQTLPSTTEQQGALSSELPSTSPS) is disordered. The segment covering 476–496 (SPPSGSIPSQTLPSTTEQQGA) has biased composition (polar residues). Residues 497 to 507 (LSSELPSTSPS) are compositionally biased toward low complexity. Positions 541–578 (TEEELSVLESCLHRWRTEIENDTRDLQESISRIHRTIE) form a coiled coil. Active-site residues include His-599 and His-607. A coiled-coil region spans residues 684 to 717 (DLRDFVEEDNQRFEKELEEWDAQLAQKALQEKLL). A disordered region spans residues 727–749 (TSVTTAQAAGDPEYLEQPSRSDF). Tyr-740 is modified (phosphotyrosine).

It belongs to the peptidase C19 family. As to quaternary structure, homotetramer, inhibited form. Homodimer, active form. Interacts with ACTA1 (via its C-terminus); the interaction occurs for all isoforms but is strongest for isoform USP25m in muscle differentiating cells. Interacts (isoform USP25m only) with MYBPC1; the interaction prevents proteasomal degradation of MYBPC1. Interacts (isoform USP25m only) with FLNC (via filament repeats 17-18, 20-21 and 24). Interacts with GAPDH. Interacts with SUMO3; the interaction sumoylates efficiently USP25. Interacts with SUMO2; the interaction sumoylates efficiently USP25. Interacts with SUMO1; the interaction only weakly sumoylates USP25. Interacts with SYK; phosphorylates USP25 and regulates USP25 intracellular levels. In terms of processing, acetylated. Sumoylation impairs binding to and hydrolysis of ubiquitin chains. Sumoylated preferentially with SUMO2 or SUMO3. Desumoylated by SENP1. Polyubiquitinated by SMURF1 by promoting the 'Lys-48'-linkage leading to proteasomal degradation. Post-translationally, preferentially monoubiquitinated but can also be polyubiquitinated. Autodeubiquitinated. Ubiquitination activates the enzymatic activity either by preventing sumoylation or by allowing novel interactions. In terms of processing, phosphorylation in the C-terminal by SYK regulates USP25 cellular levels. In terms of tissue distribution, isoform USP25a is found in most adult and fetal tissues; expression is moderately high in testis, pancreas, kidney, skeletal muscle, liver, lung, placenta, heart, but very low in peripheral blood, colon, small intestine, ovary, prostate, thymus and spleen. Expressed in the brain, with high levels in the cerebral cortex. Isoform USP25b is found in all tissues except heart and skeletal muscle. Isoform USP25m is heart and skeletal muscle specific.

It localises to the cytoplasm. It is found in the nucleus. It carries out the reaction Thiol-dependent hydrolysis of ester, thioester, amide, peptide and isopeptide bonds formed by the C-terminal Gly of ubiquitin (a 76-residue protein attached to proteins as an intracellular targeting signal).. Deubiquitinating enzyme that hydrolyzes ubiquitin moieties conjugated to substrates and thus, functions in various biological processes including inflammation and immune response. Modulates the Wnt/beta-catenin pathway by deubiquitinating and stabilizing tankyrases TNKS1 and TNKS2. Regulates KEAP1-NRF2 axis in the defense against oxidative assaults by deubiquitinating KEAP1 and protecting it from degradation leading to degradation of the NRF2 transcription factor that is responsible for mounting an anti-oxidation gene expression program. Positively regulates RNA virus-induced innate signaling by interacting with and deubiquitinating ERLIN1 and ERLIN2. In turn, restricts virus production by regulating cholesterol biosynthetic flux. Acts as a negative regulator of interleukin-17-mediated signaling and inflammation through the removal of 'Lys-63'-linked ubiquitination of TRAF5 and TRAF6. Prevents the ubiquitination and degradation of TRAF3 to reduce the phosphorylation levels of JNK and P38, the secretion of IL-1B and to induce endotoxin tolerance. Functionally, the muscle-specific isoform (USP25m) may have a role in the regulation of muscular differentiation and function. The polypeptide is Ubiquitin carboxyl-terminal hydrolase 25 (USP25) (Homo sapiens (Human)).